The primary structure comprises 726 residues: Probable dipeptidyl-peptidase 5 (726 aa).

An N-terminal signal peptide occupies residues 1-19 (MGALQWLSITAAAASAVSA). N-linked (GlcNAc...) asparagine glycans are attached at residues Asn97, Asn153, Asn259, Asn398, Asn453, and Asn529. Catalysis depends on Ser564, which acts as the Charge relay system. An N-linked (GlcNAc...) asparagine glycan is attached at Asn611. Catalysis depends on charge relay system residues Asp647 and His679.

It belongs to the peptidase S9C family.

It is found in the secreted. Extracellular dipeptidyl-peptidase which removes N-terminal dipeptides sequentially from polypeptides having unsubstituted N-termini. This chain is Probable dipeptidyl-peptidase 5 (dpp5), found in Aspergillus niger.